Consider the following 309-residue polypeptide: tRNA pseudouridine synthase B (309 aa).

The active-site Nucleophile is the aspartate 40.

It belongs to the pseudouridine synthase TruB family. Type 1 subfamily.

It catalyses the reaction uridine(55) in tRNA = pseudouridine(55) in tRNA. In terms of biological role, responsible for synthesis of pseudouridine from uracil-55 in the psi GC loop of transfer RNAs. This chain is tRNA pseudouridine synthase B, found in Mycobacterium avium (strain 104).